Consider the following 40-residue polypeptide: uncharacterized protein (40 aa).

Positions 1–27 are cleaved as a signal peptide; the sequence is MFPADVILQCFGFSVGIALVGYVISLF.

This is an uncharacterized protein from Archaeoglobus fulgidus (strain ATCC 49558 / DSM 4304 / JCM 9628 / NBRC 100126 / VC-16).